The sequence spans 382 residues: MTGHATVWGVRISRVVPGRAVTGDEVRELLSGTGATVREAVRLAELTTLRVGGPAVLAECGTTEALVATVRALDAAGVPVLLLAGGSNLLVGDDGFDGVVVRVATSGVELGADGVLAEAGADWDAVVAATVAAGLGGLECLSGIPGSAGATPVQNVGAYGVEVAELLRRVRLLDRATGEIRWAGPGELGFGYRTSVLKHSDAAVVLAVEFALRPDGSSAPLRYRELAAALAADEGESRPAAAVREAVLRLRASKGMVLDPADHDTWSAGSFFTNPVVPADRIEQVRAAIHAHVGEVTIPTYPAADGVKLSAGWLIERAGFGKGWPGAEAPARLSTKHTLALTNRGTARAADVVALARTVRDGVAERFGIRLEPEPVTVGVRL.

Residues 50-253 (RVGGPAVLAE…REAVLRLRAS (204 aa)) enclose the FAD-binding PCMH-type domain. Arg193 is an active-site residue. Ser270 serves as the catalytic Proton donor. Glu374 is an active-site residue.

This sequence belongs to the MurB family. FAD is required as a cofactor.

The protein resides in the cytoplasm. It carries out the reaction UDP-N-acetyl-alpha-D-muramate + NADP(+) = UDP-N-acetyl-3-O-(1-carboxyvinyl)-alpha-D-glucosamine + NADPH + H(+). It participates in cell wall biogenesis; peptidoglycan biosynthesis. Functionally, cell wall formation. This chain is UDP-N-acetylenolpyruvoylglucosamine reductase, found in Nocardia farcinica (strain IFM 10152).